The following is a 422-amino-acid chain: Glutamyl-tRNA reductase (422 aa).

Substrate contacts are provided by residues 49 to 52, Ser-110, 115 to 117, and Gln-121; these read TCNR and EPQ. Cys-50 serves as the catalytic Nucleophile. Residue 190 to 195 coordinates NADP(+); sequence GAGETI.

It belongs to the glutamyl-tRNA reductase family. Homodimer.

It carries out the reaction (S)-4-amino-5-oxopentanoate + tRNA(Glu) + NADP(+) = L-glutamyl-tRNA(Glu) + NADPH + H(+). Its pathway is porphyrin-containing compound metabolism; protoporphyrin-IX biosynthesis; 5-aminolevulinate from L-glutamyl-tRNA(Glu): step 1/2. Functionally, catalyzes the NADPH-dependent reduction of glutamyl-tRNA(Glu) to glutamate 1-semialdehyde (GSA). The protein is Glutamyl-tRNA reductase of Colwellia psychrerythraea (strain 34H / ATCC BAA-681) (Vibrio psychroerythus).